Consider the following 314-residue polypeptide: Thymidylate synthase (314 aa).

DUMP-binding positions include Arg-21 and 176-177 (RR). Cys-196 serves as the catalytic Nucleophile. Residues 216 to 219 (RSAD), Asn-227, and 257 to 259 (HLY) each bind dUMP. Asp-219 provides a ligand contact to (6R)-5,10-methylene-5,6,7,8-tetrahydrofolate. Ser-313 is a (6R)-5,10-methylene-5,6,7,8-tetrahydrofolate binding site.

Belongs to the thymidylate synthase family. Bacterial-type ThyA subfamily. Homodimer.

The protein resides in the cytoplasm. It carries out the reaction dUMP + (6R)-5,10-methylene-5,6,7,8-tetrahydrofolate = 7,8-dihydrofolate + dTMP. It participates in pyrimidine metabolism; dTTP biosynthesis. Functionally, catalyzes the reductive methylation of 2'-deoxyuridine-5'-monophosphate (dUMP) to 2'-deoxythymidine-5'-monophosphate (dTMP) while utilizing 5,10-methylenetetrahydrofolate (mTHF) as the methyl donor and reductant in the reaction, yielding dihydrofolate (DHF) as a by-product. This enzymatic reaction provides an intracellular de novo source of dTMP, an essential precursor for DNA biosynthesis. The chain is Thymidylate synthase from Listeria monocytogenes serotype 4a (strain HCC23).